We begin with the raw amino-acid sequence, 49 residues long: Large ribosomal subunit protein bL33B (49 aa).

The protein belongs to the bacterial ribosomal protein bL33 family.

The chain is Large ribosomal subunit protein bL33B from Shouchella clausii (strain KSM-K16) (Alkalihalobacillus clausii).